Here is a 127-residue protein sequence, read N- to C-terminus: Large ribosomal subunit protein bL19 (127 aa).

The protein belongs to the bacterial ribosomal protein bL19 family.

Functionally, this protein is located at the 30S-50S ribosomal subunit interface and may play a role in the structure and function of the aminoacyl-tRNA binding site. This is Large ribosomal subunit protein bL19 from Acidovorax ebreus (strain TPSY) (Diaphorobacter sp. (strain TPSY)).